A 341-amino-acid polypeptide reads, in one-letter code: Ribosomal RNA small subunit methyltransferase H (341 aa).

S-adenosyl-L-methionine contacts are provided by residues 47–49, Asp64, Phe91, Asp109, and Gln116; that span reads GGY. The tract at residues 292 to 318 is disordered; the sequence is VAASEDEASRNPRARSAKLRAGVRTPA.

The protein belongs to the methyltransferase superfamily. RsmH family.

It localises to the cytoplasm. The catalysed reaction is cytidine(1402) in 16S rRNA + S-adenosyl-L-methionine = N(4)-methylcytidine(1402) in 16S rRNA + S-adenosyl-L-homocysteine + H(+). In terms of biological role, specifically methylates the N4 position of cytidine in position 1402 (C1402) of 16S rRNA. The chain is Ribosomal RNA small subunit methyltransferase H from Sinorhizobium fredii (strain NBRC 101917 / NGR234).